Here is a 425-residue protein sequence, read N- to C-terminus: tRNA(Ile)-lysidine synthase (425 aa).

Residue 27–32 (SGGLDS) coordinates ATP.

The protein belongs to the tRNA(Ile)-lysidine synthase family.

It is found in the cytoplasm. The catalysed reaction is cytidine(34) in tRNA(Ile2) + L-lysine + ATP = lysidine(34) in tRNA(Ile2) + AMP + diphosphate + H(+). Functionally, ligates lysine onto the cytidine present at position 34 of the AUA codon-specific tRNA(Ile) that contains the anticodon CAU, in an ATP-dependent manner. Cytidine is converted to lysidine, thus changing the amino acid specificity of the tRNA from methionine to isoleucine. In Streptococcus pneumoniae serotype 19F (strain G54), this protein is tRNA(Ile)-lysidine synthase.